The primary structure comprises 332 residues: Caffeoylshikimate esterase (332 aa).

The span at 1-13 (MPSEAESSANSAP) shows a compositional bias: low complexity. The interval 1-26 (MPSEAESSANSAPATPPPPPNFWGTM) is disordered. The active-site Nucleophile is the Ser147. Catalysis depends on charge relay system residues Asp268 and His298.

This sequence belongs to the AB hydrolase superfamily. Monoacylglycerol lipase family. As to quaternary structure, interacts with ACBP2. Expressed in vasculature of roots and leaves, stems, flowers and siliques.

Its subcellular location is the cell membrane. It catalyses the reaction 5-O-[(E)-caffeoyl]-shikimate + H2O = shikimate + (E)-caffeate + H(+). Its function is as follows. Esterase involved in the biosynthesis of lignin. Hydrolyzes caffeoylshikimate into caffeate and shikimate. Together with 4-coumarate--CoA ligase (4CL), acts on an alternative reaction for the formation of caffeoyl-CoA and bypasses the second reaction of shikimate O-hydroxycinnamoyltransferase (HST). Also accepts 4-coumaroylshikimate as substrate, but with lower activity. According to PubMed:20345607 and PubMed:22915575, possesses monoacylglycerol O-acyltransferase, monoacylglycerol lipase and lysophospholipase activities in vitro. With the association of ACBP2, may promote the degradation of lysophosphatidylcholine and detoxify the peroxidized membrane in response to cadmium-induced oxidative stress. However these results require additional confirmation in vivo. The sequence is that of Caffeoylshikimate esterase (CSE) from Arabidopsis thaliana (Mouse-ear cress).